A 397-amino-acid chain; its full sequence is Phosphoglycerate kinase (397 aa).

Substrate is bound by residues 21-23 (DFN), Arg-37, 60-63 (HLGR), Arg-119, and Arg-152. ATP is bound by residues Lys-203, Gly-294, Glu-325, and 354 to 357 (GGDS).

It belongs to the phosphoglycerate kinase family. As to quaternary structure, monomer.

Its subcellular location is the cytoplasm. It catalyses the reaction (2R)-3-phosphoglycerate + ATP = (2R)-3-phospho-glyceroyl phosphate + ADP. The protein operates within carbohydrate degradation; glycolysis; pyruvate from D-glyceraldehyde 3-phosphate: step 2/5. The protein is Phosphoglycerate kinase of Chlorobium chlorochromatii (strain CaD3).